Here is a 423-residue protein sequence, read N- to C-terminus: Methylenetetrahydrofolate--tRNA-(uracil-5-)-methyltransferase TrmFO 2 (423 aa).

An FAD-binding site is contributed by 8 to 13 (GAGLSG).

This sequence belongs to the MnmG family. TrmFO subfamily. FAD is required as a cofactor.

The protein localises to the cytoplasm. It carries out the reaction uridine(54) in tRNA + (6R)-5,10-methylene-5,6,7,8-tetrahydrofolate + NADH + H(+) = 5-methyluridine(54) in tRNA + (6S)-5,6,7,8-tetrahydrofolate + NAD(+). The enzyme catalyses uridine(54) in tRNA + (6R)-5,10-methylene-5,6,7,8-tetrahydrofolate + NADPH + H(+) = 5-methyluridine(54) in tRNA + (6S)-5,6,7,8-tetrahydrofolate + NADP(+). Catalyzes the folate-dependent formation of 5-methyl-uridine at position 54 (M-5-U54) in all tRNAs. The polypeptide is Methylenetetrahydrofolate--tRNA-(uracil-5-)-methyltransferase TrmFO 2 (Mycoplasma capricolum subsp. capricolum (strain California kid / ATCC 27343 / NCTC 10154)).